We begin with the raw amino-acid sequence, 243 residues long: 1-(5-phosphoribosyl)-5-[(5-phosphoribosylamino)methylideneamino] imidazole-4-carboxamide isomerase (243 aa).

The Proton acceptor role is filled by Asp-8. Asp-129 (proton donor) is an active-site residue.

This sequence belongs to the HisA/HisF family.

The protein resides in the cytoplasm. The enzyme catalyses 1-(5-phospho-beta-D-ribosyl)-5-[(5-phospho-beta-D-ribosylamino)methylideneamino]imidazole-4-carboxamide = 5-[(5-phospho-1-deoxy-D-ribulos-1-ylimino)methylamino]-1-(5-phospho-beta-D-ribosyl)imidazole-4-carboxamide. Its pathway is amino-acid biosynthesis; L-histidine biosynthesis; L-histidine from 5-phospho-alpha-D-ribose 1-diphosphate: step 4/9. The chain is 1-(5-phosphoribosyl)-5-[(5-phosphoribosylamino)methylideneamino] imidazole-4-carboxamide isomerase from Brucella anthropi (strain ATCC 49188 / DSM 6882 / CCUG 24695 / JCM 21032 / LMG 3331 / NBRC 15819 / NCTC 12168 / Alc 37) (Ochrobactrum anthropi).